The sequence spans 291 residues: Small ribosomal subunit biogenesis GTPase RsgA (291 aa).

The CP-type G domain maps to 63-221 (KNELKRPPVS…IADTPGFSAL (159 aa)). Residues 112-115 (TKKD) and 164-172 (GQSGVGKST) each bind GTP. Positions 245, 250, 252, and 258 each coordinate Zn(2+).

Belongs to the TRAFAC class YlqF/YawG GTPase family. RsgA subfamily. Monomer. Associates with 30S ribosomal subunit, binds 16S rRNA. Zn(2+) is required as a cofactor.

Its subcellular location is the cytoplasm. One of several proteins that assist in the late maturation steps of the functional core of the 30S ribosomal subunit. Helps release RbfA from mature subunits. May play a role in the assembly of ribosomal proteins into the subunit. Circularly permuted GTPase that catalyzes slow GTP hydrolysis, GTPase activity is stimulated by the 30S ribosomal subunit. The protein is Small ribosomal subunit biogenesis GTPase RsgA of Staphylococcus aureus (strain Mu50 / ATCC 700699).